A 1383-amino-acid chain; its full sequence is DNA-directed RNA polymerase subunit beta (1383 aa).

The protein belongs to the RNA polymerase beta chain family. As to quaternary structure, the RNAP catalytic core consists of 2 alpha, 1 beta, 1 beta' and 1 omega subunit. When a sigma factor is associated with the core the holoenzyme is formed, which can initiate transcription.

The enzyme catalyses RNA(n) + a ribonucleoside 5'-triphosphate = RNA(n+1) + diphosphate. DNA-dependent RNA polymerase catalyzes the transcription of DNA into RNA using the four ribonucleoside triphosphates as substrates. The protein is DNA-directed RNA polymerase subunit beta of Bartonella tribocorum (strain CIP 105476 / IBS 506).